Here is a 399-residue protein sequence, read N- to C-terminus: Presilphiperfolan-8-beta-ol synthase (399 aa).

The segment at 1–60 (MAIPALEPQLHDADTSSNNMSSNSTDSGYDTNSTTPLEKSEKPNTQELKQQQLDPKRPPF) is disordered. Residues 15–27 (TSSNNMSSNSTDS) show a composition bias toward low complexity. The segment covering 28-37 (GYDTNSTTPL) has biased composition (polar residues). 3 residues coordinate Mg(2+): Asp141, Asn285, and Ser289. The DDXXD motif motif lies at 141 to 145 (DDQFD). (2E,6E)-farnesyl diphosphate is bound by residues Arg373 and Tyr374.

Belongs to the terpene synthase family. Requires Mg(2+) as cofactor.

The enzyme catalyses (2E,6E)-farnesyl diphosphate + H2O = presilphiperfolan-8beta-ol + diphosphate. It participates in secondary metabolite biosynthesis. Presilphiperfolan-8-beta-ol synthase; part of the gene cluster that mediates the biosynthesis of botrydial. Botrydial is necessary for colonization of plant tissue by the T4 strain. It is a strain-dependent virulence factor since highly aggressive strains like SAS56 or B05 still retain substantial virulence when botrydial synthesis is impaired, since they produce also botcinic acid. The first step of botrydial biosynthesis is performed by the sesquiterpene synthase BOT2 which catalyzes the cyclization of farnesyl diphosphate (FPP) to presilphiperfolan-8-beta-ol (PSP). The cytochrome P450 monooxygenase BOT4 then catalyzes the hydroxylation at C-4 to give a probotryane intermediate. Acetylation of the hydroxyl at C-4 is carried out by the acetyltransferase BOT5, followed by the combined action of the P450 monooxygenases BOT3 and BOT1, to yield finally the glycol, via the regio- and stereospecific hydroxylations at C-10 and C-15 of the probotryane intermediates, respectively. The cleavage of the C10-C15 bond of probotryane skeleton is an intriguing and chemically important reaction, which could be mediated by some of the monooxygenases or by a combination of them. It is possible that either BOT3 or BOT1 would oxidize either the 10- or the 15-hydroxy group to the hydroperoxide derivative, which would then undergo heterolytic fragmentation to give the dialdehyde botrydial. Finally, the dehydrogenase BOT7 might be involved in the conversion of botrydial to dihydrobotrydial. The polypeptide is Presilphiperfolan-8-beta-ol synthase (BOT2) (Botryotinia fuckeliana (Noble rot fungus)).